The primary structure comprises 261 residues: 3-deoxy-manno-octulosonate cytidylyltransferase 1 (261 aa).

This sequence belongs to the KdsB family.

The protein resides in the cytoplasm. The enzyme catalyses 3-deoxy-alpha-D-manno-oct-2-ulosonate + CTP = CMP-3-deoxy-beta-D-manno-octulosonate + diphosphate. It functions in the pathway nucleotide-sugar biosynthesis; CMP-3-deoxy-D-manno-octulosonate biosynthesis; CMP-3-deoxy-D-manno-octulosonate from 3-deoxy-D-manno-octulosonate and CTP: step 1/1. The protein operates within bacterial outer membrane biogenesis; lipopolysaccharide biosynthesis. Its function is as follows. Activates KDO (a required 8-carbon sugar) for incorporation into bacterial lipopolysaccharide in Gram-negative bacteria. This chain is 3-deoxy-manno-octulosonate cytidylyltransferase 1, found in Burkholderia lata (strain ATCC 17760 / DSM 23089 / LMG 22485 / NCIMB 9086 / R18194 / 383).